The primary structure comprises 243 residues: UTP--glucose-1-phosphate uridylyltransferase AglF (243 aa).

Belongs to the UDPGP type 2 family.

It carries out the reaction alpha-D-glucose 1-phosphate + UTP + H(+) = UDP-alpha-D-glucose + diphosphate. Its pathway is cell surface structure biogenesis; S-layer biogenesis. Involved in the assembly of a N-linked pentasaccharide that decorates the S-layer glycoprotein and flagellins. Involved in the biosynthesis of the hexuronic acid found at position 3 of the pentasaccharide. The protein is UTP--glucose-1-phosphate uridylyltransferase AglF (aglF) of Haloferax volcanii (strain ATCC 29605 / DSM 3757 / JCM 8879 / NBRC 14742 / NCIMB 2012 / VKM B-1768 / DS2) (Halobacterium volcanii).